The chain runs to 523 residues: MAAKKVDVLLIGGGIMSATLGVWLRELEPTWSMQMLERLDGVALESSNGWNNAGTGHSALAELNYTPEDDNGNIKITQAVNINESFQISRQFWAWQVRNGVLKNPRSFINHTPHMSFVWGDENVAYLEKRYQALKASPLFAGMEFSTDPEQIKKWVPLMMEGRDPSQKLGATWSPLGTDMEFGEITRQFVSHLQSDQNFDLQVNSEVSDIQRNADGSWRVTYTNTKTDAEQVVDAKFVFIGAGGGALHLLQMSGVPEADDYAGFPVGGSFLINENPDVTMQHLAKAYGKASVGSPPMSVPHLDTRVLGGKRVILFGPFATFSTKFLKEGSYFDLVSSVTTSNAWPMVRVGIDEYPLVEYLAGQLMMSDDDRFAALKEYFPNAKQGEWRLWQAGQRVQIIKRDEEKGGVLRLGTEVVAAKDGSIAGLLGASPGASTAAPIMLSVLEKVFKDKVATPEWQAKLRQIVPSYGTKLNDDPEKVREEWAYTAEHLQLPTPPQIDLEALKGAGAAPAGAPVKKVPDIAL.

This sequence belongs to the MQO family. The cofactor is FAD.

It carries out the reaction (S)-malate + a quinone = a quinol + oxaloacetate. The protein operates within carbohydrate metabolism; tricarboxylic acid cycle; oxaloacetate from (S)-malate (quinone route): step 1/1. This chain is Probable malate:quinone oxidoreductase, found in Agrobacterium fabrum (strain C58 / ATCC 33970) (Agrobacterium tumefaciens (strain C58)).